Reading from the N-terminus, the 264-residue chain is Undecaprenyl-diphosphatase (264 aa).

A run of 8 helical transmembrane segments spans residues 7–27 (IVIPIIIGIIQGITEFFPVSS), 45–65 (TKILEIFVQLGSTISVFLFFY), 86–106 (IHVLISILPTMFLGLIFYNKI), 109–129 (LFNPTNVMYALILGGFFLIIA), 145–165 (INLVQSLIIGCFQTLCLYPGF), 186–206 (VNFSFIISIPLIAGASVLDLI), 215–235 (LNIPYLFSGFTISFIISFLLI), and 244–264 (KVSLTFFGIYRFLIAGIIYFI).

It belongs to the UppP family.

The protein localises to the cell membrane. The enzyme catalyses di-trans,octa-cis-undecaprenyl diphosphate + H2O = di-trans,octa-cis-undecaprenyl phosphate + phosphate + H(+). Catalyzes the dephosphorylation of undecaprenyl diphosphate (UPP). Confers resistance to bacitracin. The chain is Undecaprenyl-diphosphatase from Buchnera aphidicola subsp. Schizaphis graminum (strain Sg).